Here is a 172-residue protein sequence, read N- to C-terminus: Ribosomally synthesized cyclic peptide phomopsin precursor phomA (172 aa).

The first 18 residues, 1–18 (MRFTPAIVIAAFCSLAVA), serve as a signal peptide directing secretion. 11 propeptides span residues 19 to 35 (APAA…AVED), 42 to 50 (KKRGEAVED), 57 to 65 (KKRGEAVED), 72 to 79 (KRGEAVED), 86 to 93 (KRGEAVED), 100 to 108 (KKRGEAVED), 115 to 122 (KRGEAVED), 129 to 137 (RKRGEAVED), 144 to 151 (KRGEAVED), 158 to 165 (KRGEAVED), and Lys172.

PhomA is processed by several endopeptidases including kexin proteases as well as the cluster-specific S41 family peptidase phomP1 and the oligopeptidase phomG to produce 10 identical copies of the hexapeptide Tyr-Val-Ile-Pro-Ile-Asp, that is further modified to yield phomapsins. The timing and order of proteolysis of the phomA precursor and PTMs are still unknown. Two tyrosinase-like enzymes, phomQ1 and phomQ2, catalyze the chlorination and hydroxylation of Tyr, respectively. PhomYb, is proposed to be involved in the construction of the macrocyclic structure. The other 4 ustYa family proteins may be involved in PTMs that generate the unique structure of phomopsin A. PhomYa is required for the hydroxylation of C-beta of Tyr. PhomYc, phomYd, and phomYe are responsible for the biosynthesis of 2,3-dehydroisoleucine (dIle), 2,3-dehydroaspartic acid (dAsp), and 3,4-dehydroproline (dPro), respectively. While dIle formation by phomYc is indispensable for the installation of dAsp by phomYd, the order of the other PTMs have not been elucidated yet. Most of the biosynthetic enzymes likely have broad substrate specificity, and thus, there might be a metabolic grid from a precursor to phomopsin A. The enzyme(s) responsible for the biosynthesis of 3,4-dehydrovaline (dVal) have also not been identified yet. Finally, phomM acts as an S-adenosylmethionine-dependent alpha-N-methyltransferase that catalyzes two successive N-methylation reactions, converting N-desmethyl-phomopsin A to phomopsin A and phomopsin A further to an N,N-dimethylated congener called phomopsin E.

It functions in the pathway mycotoxin biosynthesis. In terms of biological role, ribosomally synthesized cyclic peptide phomopsin precursor; part of the gene cluster that mediates the biosynthesis of the phomopsins, a group of hexapeptide mycotoxins which infects lupins and causes lupinosis disease in livestock. The phomA translated product contains a 10-fold repeated peptide embedding the hexapeptide Tyr-Val-Ile-Pro-Ile-Asp, that is converted into phomapsins. After being excised from the precursor peptide by kexin proteases, the core peptides are cyclized and modified post-translationally by enzymes encoded within the corresponding gene cluster. The protein is Ribosomally synthesized cyclic peptide phomopsin precursor phomA of Diaporthe leptostromiformis (Lupinosis disease fungus).